The sequence spans 130 residues: MIVRTTQQITGTERDVSGDGWHSKRIVLADDGVGFSFHETTIDAGTVHVFHYQHHIEAVWLTAGTGTLTNLENGDVFTLGPGSMYLLDGNERHQLSADSEMRMMCVFNPPVTGREVHDESGAYPAAPALS.

This sequence belongs to the ectoine synthase family.

It catalyses the reaction (2S)-4-acetamido-2-aminobutanoate = L-ectoine + H2O. Its pathway is amine and polyamine biosynthesis; ectoine biosynthesis; L-ectoine from L-aspartate 4-semialdehyde: step 3/3. Its function is as follows. Catalyzes the circularization of gamma-N-acetyl-alpha,gamma-diaminobutyric acid (ADABA) to ectoine (1,4,5,6-tetrahydro-2-methyl-4-pyrimidine carboxylic acid), which is an excellent osmoprotectant. This chain is L-ectoine synthase, found in Mycobacteroides abscessus (strain ATCC 19977 / DSM 44196 / CCUG 20993 / CIP 104536 / JCM 13569 / NCTC 13031 / TMC 1543 / L948) (Mycobacterium abscessus).